Consider the following 267-residue polypeptide: Myb-related protein Hv1 (267 aa).

HTH myb-type domains lie at 9–61 and 62–116; these read KAHT…INYL and RPDL…RRKL. 2 DNA-binding regions (H-T-H motif) span residues 37-61 and 89-112; these read WRSLPKAAGLLRCGKSCRLRWINYL and WSLIAGRLPGRTDNEIKNYWNTHI.

As to expression, germinating seed and apical meristem of shoot and root.

Its subcellular location is the nucleus. Its function is as follows. Possible transcription activator in response to an external signal. May be involved in the regulation of flavonoid biosynthesis. The sequence is that of Myb-related protein Hv1 (MYB1) from Hordeum vulgare (Barley).